The following is a 421-amino-acid chain: UDP-N-acetylglucosamine 1-carboxyvinyltransferase (421 aa).

22–23 (KN) contributes to the phosphoenolpyruvate binding site. Arg-92 is a UDP-N-acetyl-alpha-D-glucosamine binding site. Catalysis depends on Cys-116, which acts as the Proton donor. Residue Cys-116 is modified to 2-(S-cysteinyl)pyruvic acid O-phosphothioketal. Asp-307 and Val-329 together coordinate UDP-N-acetyl-alpha-D-glucosamine.

Belongs to the EPSP synthase family. MurA subfamily.

It is found in the cytoplasm. The catalysed reaction is phosphoenolpyruvate + UDP-N-acetyl-alpha-D-glucosamine = UDP-N-acetyl-3-O-(1-carboxyvinyl)-alpha-D-glucosamine + phosphate. Its pathway is cell wall biogenesis; peptidoglycan biosynthesis. Cell wall formation. Adds enolpyruvyl to UDP-N-acetylglucosamine. The sequence is that of UDP-N-acetylglucosamine 1-carboxyvinyltransferase from Kosmotoga olearia (strain ATCC BAA-1733 / DSM 21960 / TBF 19.5.1).